The chain runs to 146 residues: Large ribosomal subunit protein bL19 (146 aa).

The segment at 116–146 (ADRKRIDQDRAAERAAKEEAQKAQEPKASQE) is disordered. The span at 119 to 146 (KRIDQDRAAERAAKEEAQKAQEPKASQE) shows a compositional bias: basic and acidic residues.

As to quaternary structure, part of the 50S risobomal subunit. Contacts protein L14. Forms a bridge to the 30S subunit in the 70S ribosome, contacting the 16S rRNA.

Functionally, contacts the 16S rRNA of the 30S subunit (part of bridge B6), connecting the 2 subunits. The chain is Large ribosomal subunit protein bL19 (rplS) from Thermus thermophilus (strain ATCC 27634 / DSM 579 / HB8).